Reading from the N-terminus, the 166-residue chain is Small ribosomal subunit protein cS23z (166 aa).

Belongs to the chloroplast-specific ribosomal protein cS23 family. As to quaternary structure, part of the 30S ribosomal subunit.

The protein localises to the plastid. Its subcellular location is the chloroplast. Functionally, component of the chloroplast ribosome (chloro-ribosome), a dedicated translation machinery responsible for the synthesis of chloroplast genome-encoded proteins, including proteins of the transcription and translation machinery and components of the photosynthetic apparatus. The polypeptide is Small ribosomal subunit protein cS23z (Arabidopsis thaliana (Mouse-ear cress)).